Consider the following 380-residue polypeptide: Cytochrome b (380 aa).

Helical transmembrane passes span 34-54, 78-99, 114-134, and 179-199; these read FGSL…LLAM, WLIR…YLHI, WNIG…GYVL, and FFAL…VHLT. Positions 84 and 98 each coordinate heme b. Histidine 183 and histidine 197 together coordinate heme b. Histidine 202 contributes to the a ubiquinone binding site. Transmembrane regions (helical) follow at residues 227-247, 289-309, 321-341, and 348-368; these read IKDM…ALFS, LGGV…PLLH, LLPF…WVGS, and FIII…VLFP.

This sequence belongs to the cytochrome b family. In terms of assembly, the cytochrome bc1 complex contains 11 subunits: 3 respiratory subunits (MT-CYB, CYC1 and UQCRFS1), 2 core proteins (UQCRC1 and UQCRC2) and 6 low-molecular weight proteins (UQCRH/QCR6, UQCRB/QCR7, UQCRQ/QCR8, UQCR10/QCR9, UQCR11/QCR10 and a cleavage product of UQCRFS1). This cytochrome bc1 complex then forms a dimer. Requires heme b as cofactor.

It is found in the mitochondrion inner membrane. Its function is as follows. Component of the ubiquinol-cytochrome c reductase complex (complex III or cytochrome b-c1 complex) that is part of the mitochondrial respiratory chain. The b-c1 complex mediates electron transfer from ubiquinol to cytochrome c. Contributes to the generation of a proton gradient across the mitochondrial membrane that is then used for ATP synthesis. The chain is Cytochrome b (MT-CYB) from Gymnorhina tibicen (Australian magpie).